The primary structure comprises 59 residues: Putative potassium channel toxin Ts24 (59 aa).

Residues 1–22 (MKAFYGILIIFILISMIHLSQQ) form the signal peptide. 3 disulfide bridges follow: Cys-29-Cys-50, Cys-35-Cys-55, and Cys-39-Cys-57.

Belongs to the short scorpion toxin superfamily. Potassium channel inhibitor family. Alpha-KTx 04 subfamily. Expressed by the venom gland.

It localises to the secreted. In terms of biological role, potently blocks Kv1.1/KCNA1 (85%), Kv1.2/KCNA2 (91%), Kv1.3/KCNA3 (89%), Kv1.6/KCNA6 (94%), and Shaker (97%). This is Putative potassium channel toxin Ts24 from Tityus serrulatus (Brazilian scorpion).